Reading from the N-terminus, the 196-residue chain is uncharacterized protein (196 aa).

The region spanning 51–164 (VAEHSLLVEE…DRIFGKPDPV (114 aa)) is the HD domain.

This is an uncharacterized protein from Rhodobacter capsulatus (strain ATCC BAA-309 / NBRC 16581 / SB1003).